A 65-amino-acid polypeptide reads, in one-letter code: Putative cytochrome c oxidase subunit 5C-4 (65 aa).

The chain crosses the membrane as a helical span at residues 20–37 (EIIYGITLGFAVGGLWKM).

Belongs to the cytochrome c oxidase subunit 5C family.

The protein resides in the mitochondrion inner membrane. In terms of biological role, this protein is one of the nuclear-coded polypeptide chains of cytochrome c oxidase, the terminal oxidase in mitochondrial electron transport. In Arabidopsis thaliana (Mouse-ear cress), this protein is Putative cytochrome c oxidase subunit 5C-4.